We begin with the raw amino-acid sequence, 211 residues long: FMN-dependent NADH:quinone oxidoreductase (211 aa).

FMN is bound by residues S10 and 16–18 (SVS).

It belongs to the azoreductase type 1 family. As to quaternary structure, homodimer. FMN serves as cofactor.

The enzyme catalyses 2 a quinone + NADH + H(+) = 2 a 1,4-benzosemiquinone + NAD(+). It carries out the reaction N,N-dimethyl-1,4-phenylenediamine + anthranilate + 2 NAD(+) = 2-(4-dimethylaminophenyl)diazenylbenzoate + 2 NADH + 2 H(+). Quinone reductase that provides resistance to thiol-specific stress caused by electrophilic quinones. Its function is as follows. Also exhibits azoreductase activity. Catalyzes the reductive cleavage of the azo bond in aromatic azo compounds to the corresponding amines. The polypeptide is FMN-dependent NADH:quinone oxidoreductase (Parafrankia sp. (strain EAN1pec)).